The following is a 1603-amino-acid chain: Vitellogenin-4 (1603 aa).

Residues 1–15 (MKSIIIASLVALAIA) form the signal peptide. The Vitellogenin domain maps to 24–685 (FSPKSEYVYK…EKNAFLPKEV (662 aa)). Asn1266 carries N-linked (GlcNAc...) asparagine glycosylation. A VWFD domain is found at 1306 to 1475 (ATCKVDQSEV…SYLLKNEECE (170 aa)). 2 disulfide bridges follow: Cys1308-Cys1438 and Cys1330-Cys1474.

Expressed in the intestine of adult hermaphrodites.

The protein localises to the secreted. Functionally, precursor of the egg-yolk proteins that are sources of nutrients during embryonic development. Together with other vitellogenins, may play a role in modulating life-span, acting via induction of autophagy and lysosomal lipolysis. This is Vitellogenin-4 (vit-4) from Caenorhabditis elegans.